The following is a 538-amino-acid chain: MSKIIEYDETARRAIEAGVNTLADAVRVTLGPRGRHVVLAKAFGGPAVTNDGVTVAREIDLEDPFENLGAQLVKSVATKTNDVAGDGTTTATVLAQALVKGGLRLVAAGANPIELGAGISKAADAVSEALLASATPVSGKDAIAQVATVSSRDQVLGELVGEAMTKVGVDGVVSVEESSTLNTELEFTEGVGFDKGFLSAYFVTDFDAQQAVLDDPVILLHQEKISSLPDLLPMLEKVAESGKPLLIIAEDIEGEALATLVVNSIRKTLKAVAVKAPFFGDRRKAFLEDLAIVTGGQVINPDTGLLLREVGTEVLGSARRVVVSKDDTIIVDGGGAKDAVANRIKQLRAEIEKTDSDWDREKLQERLAKLAGGVAVIKVGAATETALKERKESVEDAVAAAKAAVEEGIVAGGGSALLQARKALDELRGSLSGDQALGVDVFAEALGAPLYWIASNAGLDGAVAVHKVAELPAGHGLNAEKLSYGDLIADGVIDPVKVTRSAVLNSASVARMVLTTETAVVDKPAEEADDHGHGHHHH.

ATP-binding positions include 29-32 (TLGP), 86-90 (DGTTT), Gly413, and Asp494.

It belongs to the chaperonin (HSP60) family. In terms of assembly, forms a cylinder of 14 subunits composed of two heptameric rings stacked back-to-back. Interacts with the co-chaperonin GroES.

The protein localises to the cytoplasm. It carries out the reaction ATP + H2O + a folded polypeptide = ADP + phosphate + an unfolded polypeptide.. Together with its co-chaperonin GroES, plays an essential role in assisting protein folding. The GroEL-GroES system forms a nano-cage that allows encapsulation of the non-native substrate proteins and provides a physical environment optimized to promote and accelerate protein folding. This chain is Chaperonin GroEL 1, found in Mycolicibacterium paratuberculosis (strain ATCC BAA-968 / K-10) (Mycobacterium paratuberculosis).